A 495-amino-acid polypeptide reads, in one-letter code: Putative aldehyde dehydrogenase AldA (495 aa).

212–218 provides a ligand contact to NAD(+); that stretch reads GKGSESG. Catalysis depends on residues Glu-256 and Cys-290.

It belongs to the aldehyde dehydrogenase family.

The catalysed reaction is an aldehyde + NAD(+) + H2O = a carboxylate + NADH + 2 H(+). The chain is Putative aldehyde dehydrogenase AldA (aldA) from Staphylococcus aureus (strain MRSA252).